Reading from the N-terminus, the 92-residue chain is LYR motif-containing protein 4 homolog (92 aa).

Residues 40–68 are a coiled coil; it reads ANKAIRDFAEIDRQMEAGKQNLELIRRQV.

It belongs to the complex I LYR family. In terms of assembly, component of the mitochondrial core iron-sulfur cluster (ISC) assembly complex at least composed of the cysteine desulfurase Nfs1, the scaffold protein IscU, the accessory protein bcn92/Isd11/Lyrm4, and probably fh/frataxin. Interacts with Nfs1.

The protein resides in the mitochondrion. Its function is as follows. Stabilizing factor of the core iron-sulfur cluster (ISC) assembly complex that regulates the stability and cysteine desulfurase activity of Nfs1 and participates in the [2Fe-2S] clusters assembly on the scaffolding protein IscU. The sequence is that of LYR motif-containing protein 4 homolog from Drosophila subobscura (Fruit fly).